We begin with the raw amino-acid sequence, 181 residues long: MARSLAALLLLLVAAAGDSHAASPAEMYWKIALPTSPMPGAIRDLINPASSAGSASKEDTVGNVFFLEKDLFPGSKLTLHFTRATAGAALLPRGRADSVPLATEKLPEILSQLSVPAGSPAADAMSARPRRSPARRSNARRRSSPWWSSPRPASAPATCTPCPRRSTGQGRRRGRRTGWRP.

Positions 1 to 21 (MARSLAALLLLLVAAAGDSHA) are cleaved as a signal peptide. Residues 65–181 (FFLEKDLFPG…RRGRRTGWRP (117 aa)) form the BURP domain. Positions 112–181 (QLSVPAGSPA…RRGRRTGWRP (70 aa)) are disordered. The span at 128–143 (RPRRSPARRSNARRRS) shows a compositional bias: basic residues. Residues 144–157 (SPWWSSPRPASAPA) show a composition bias toward low complexity. Basic residues predominate over residues 170 to 181 (GRRRGRRTGWRP).

Expressed in roots, stems, leaves and shoot.

The protein is BURP domain-containing protein 7 (BURP7) of Oryza sativa subsp. japonica (Rice).